We begin with the raw amino-acid sequence, 139 residues long: UPF0225 protein Bpro_4182 (139 aa).

The protein belongs to the UPF0225 family.

The sequence is that of UPF0225 protein Bpro_4182 from Polaromonas sp. (strain JS666 / ATCC BAA-500).